The following is a 599-amino-acid chain: Nucleoporin p58/p45 (599 aa).

A run of 5 repeats spans residues 7–8, 30–31, 44–45, 63–64, and 68–69. Residues 7–579 are 14 X 2 AA repeats of F-G; sequence FGSGTLGSTT…VSNPASAGFG (573 aa). The interval 213–247 is disordered; sequence NEGLGGIDFSSSSDKKSDKTGTRPEDSKALKDENL. The segment covering 225–246 has biased composition (basic and acidic residues); it reads SDKKSDKTGTRPEDSKALKDEN. Coiled-coil stretches lie at residues 256–276 and 314–381; these read ENLQ…SRMS and ETAQ…SHIT. Threonine 331 is subject to Phosphothreonine. Tandem repeats lie at residues 488 to 489, 492 to 493, 513 to 514, 519 to 520, 529 to 530, 531 to 532, 545 to 546, 568 to 569, and 578 to 579. The segment at 579-599 is disordered; sequence GTGGQLLQLKKPPAGNKRGKR.

The protein belongs to the NUP58 family. As to quaternary structure, component of the p62 complex, a complex at least composed of NUP62, NUP54, and NUP58. Interacts with NUTF2. Interacts with SRP1-alpha and Importin p97 proteins when they are together, but not with SRP1-alpha protein alone. Post-translationally, O-glycosylated.

It is found in the nucleus. Its subcellular location is the nuclear pore complex. The protein localises to the nucleus membrane. Functionally, component of the nuclear pore complex, a complex required for the trafficking across the nuclear membrane. The protein is Nucleoporin p58/p45 of Homo sapiens (Human).